Here is a 106-residue protein sequence, read N- to C-terminus: Cuticle protein CP14.6 (106 aa).

A signal peptide spans 1 to 16 (MKSFFVVALLVAAAAA). Positions 37–106 (PQHYSYSVET…PQGAHLPVAA (70 aa)) constitute a Chitin-binding type R&amp;R domain.

Component of the cuticle of tobacco hornworm. The polypeptide is Cuticle protein CP14.6 (CP14.6) (Manduca sexta (Tobacco hawkmoth)).